The chain runs to 318 residues: Putative olfactory receptor 2W6 (318 aa).

The Extracellular portion of the chain corresponds to Met-1 to Leu-31. Residues Ile-32–Val-52 traverse the membrane as a helical segment. Residues Leu-53 to Thr-63 are Cytoplasmic-facing. The chain crosses the membrane as a helical span at residues Pro-64–Ile-84. The Extracellular portion of the chain corresponds to Pro-85–Cys-103. A disulfide bridge connects residues Cys-103 and Cys-185. Residues Ala-104–Met-124 form a helical membrane-spanning segment. Residues Ala-125–Arg-145 are Cytoplasmic-facing. A helical transmembrane segment spans residues Leu-146–Ala-166. The Extracellular segment spans residues Pro-167 to Glu-202. A helical transmembrane segment spans residues Ala-203–Ser-223. Topologically, residues Tyr-224–Asn-245 are cytoplasmic. Residues Thr-246–Leu-266 traverse the membrane as a helical segment. Residues Gln-267–Gly-277 are Extracellular-facing. The helical transmembrane segment at Lys-278–Leu-298 threads the bilayer. Residues Arg-299–Ile-318 lie on the Cytoplasmic side of the membrane.

It belongs to the G-protein coupled receptor 1 family.

The protein localises to the cell membrane. Odorant receptor. This Homo sapiens (Human) protein is Putative olfactory receptor 2W6 (OR2W6P).